The primary structure comprises 150 residues: Transcription antitermination protein NusB (150 aa).

Belongs to the NusB family.

Its function is as follows. Involved in transcription antitermination. Required for transcription of ribosomal RNA (rRNA) genes. Binds specifically to the boxA antiterminator sequence of the ribosomal RNA (rrn) operons. The sequence is that of Transcription antitermination protein NusB from Streptococcus pyogenes serotype M4 (strain MGAS10750).